A 312-amino-acid chain; its full sequence is Taste receptor type 2 member 7 (312 aa).

Residues 1-9 lie on the Extracellular side of the membrane; the sequence is MTYETDTTL. A helical membrane pass occupies residues 10 to 30; it reads MFVAVCEALVGILGNAFIALV. Topologically, residues 31-49 are cytoplasmic; sequence NFMGWMKNRKITAIDLILS. The chain crosses the membrane as a helical span at residues 50–70; that stretch reads SLAMSRICLQCIILLDCIILV. The Extracellular segment spans residues 71–101; it reads QYPDTYNRGKEMRIIDFFWTLTNHLSVWFAT. A helical membrane pass occupies residues 102 to 122; that stretch reads CLSIFYFFKIANFFHPLFLWI. Over 123–128 the chain is Cytoplasmic; that stretch reads KWRIDK. A helical membrane pass occupies residues 129 to 149; it reads LILRTLLACLILSLCFSLPVT. Residues 150–187 lie on the Extracellular side of the membrane; sequence ENLTDDFRRCVKTKERINSTLRCKLNKAGYASVKVNLN. Asn-151 and Asn-167 each carry an N-linked (GlcNAc...) asparagine glycan. Residues 188 to 208 form a helical membrane-spanning segment; sequence LVMLFPFSVSLVSFLLLILSL. At 209–235 the chain is on the cytoplasmic side; the sequence is WRHTRQMQLNVTGYNDPSTTAHVKATK. Residues 236–256 form a helical membrane-spanning segment; that stretch reads AVISFLVLFIVYCLAFLIATS. The Extracellular segment spans residues 257 to 266; sequence SYFMPESELA. The chain crosses the membrane as a helical span at residues 267 to 287; it reads VIWGELIALIYPSSHSFILIL. The Cytoplasmic segment spans residues 288-312; that stretch reads GNSKLKQASVRVLCRVKTMLKGRKY.

This sequence belongs to the G-protein coupled receptor T2R family. In terms of tissue distribution, expressed in subsets of taste receptor cells of the tongue and palate epithelium and exclusively in gustducin-positive cells. Expressed in 15% taste bud cells in circumvallate and foliate papillae but only in 2% in fungiform papillae. Expressed in the duodenum, antrum and fundus (part of the stomach) and in gastric endocrine cells.

The protein localises to the membrane. Functionally, gustducin-coupled receptor implicated in the perception of bitter compounds in the oral cavity and the gastrointestinal tract. Signals through PLCB2 and the calcium-regulated cation channel TRPM5. The polypeptide is Taste receptor type 2 member 7 (Tas2r7) (Rattus norvegicus (Rat)).